The sequence spans 232 residues: Phosphoribosylformylglycinamidine synthase subunit PurQ (232 aa).

In terms of domain architecture, Glutamine amidotransferase type-1 spans 3–232 (FAVIVFPGSN…SLVASALAVV (230 aa)). Cys86 serves as the catalytic Nucleophile. Residues His203 and Glu205 contribute to the active site.

In terms of assembly, part of the FGAM synthase complex composed of 1 PurL, 1 PurQ and 2 PurS subunits.

It localises to the cytoplasm. It carries out the reaction N(2)-formyl-N(1)-(5-phospho-beta-D-ribosyl)glycinamide + L-glutamine + ATP + H2O = 2-formamido-N(1)-(5-O-phospho-beta-D-ribosyl)acetamidine + L-glutamate + ADP + phosphate + H(+). The catalysed reaction is L-glutamine + H2O = L-glutamate + NH4(+). Its pathway is purine metabolism; IMP biosynthesis via de novo pathway; 5-amino-1-(5-phospho-D-ribosyl)imidazole from N(2)-formyl-N(1)-(5-phospho-D-ribosyl)glycinamide: step 1/2. In terms of biological role, part of the phosphoribosylformylglycinamidine synthase complex involved in the purines biosynthetic pathway. Catalyzes the ATP-dependent conversion of formylglycinamide ribonucleotide (FGAR) and glutamine to yield formylglycinamidine ribonucleotide (FGAM) and glutamate. The FGAM synthase complex is composed of three subunits. PurQ produces an ammonia molecule by converting glutamine to glutamate. PurL transfers the ammonia molecule to FGAR to form FGAM in an ATP-dependent manner. PurS interacts with PurQ and PurL and is thought to assist in the transfer of the ammonia molecule from PurQ to PurL. The sequence is that of Phosphoribosylformylglycinamidine synthase subunit PurQ from Gloeobacter violaceus (strain ATCC 29082 / PCC 7421).